The following is a 365-amino-acid chain: 2-aminoethylphosphonate--pyruvate transaminase (365 aa).

Position 194 is an N6-(pyridoxal phosphate)lysine (Lys194).

The protein belongs to the class-V pyridoxal-phosphate-dependent aminotransferase family. PhnW subfamily. As to quaternary structure, homodimer. Requires pyridoxal 5'-phosphate as cofactor.

The catalysed reaction is (2-aminoethyl)phosphonate + pyruvate = phosphonoacetaldehyde + L-alanine. In terms of biological role, involved in phosphonate degradation. The polypeptide is 2-aminoethylphosphonate--pyruvate transaminase (Bacillus thuringiensis (strain Al Hakam)).